Consider the following 298-residue polypeptide: MEEIFALIVSMILIVAVIPLFFWKRRRDARSREEVAEPPQVQPRENVARAGGGRRMRRRPAASGASSSTSNVQENGSGSEDEDEDEAGGTQARASKKKEKKRQEREAQRQAEEATRESRNTKQDWYAEMRRKKDEEREAEELKLEEEEKARQAKEEEAAALEFDKWKGEFSVDAEGTTEEVQGGNQDLLSEFVEYIKKQKCVPLEDLAAEFHLRTQECINRIASLESIGRLSGVMDDRGKYIYISMEEMNAVADYIKRQGRVSISHLASKSNQFIDLEPKVQHQLTEEISGMEEISVS.

The Lumenal portion of the chain corresponds to 1–2 (ME). Residues 3-23 (EIFALIVSMILIVAVIPLFFW) form a helical membrane-spanning segment. Over 24–298 (KRRRDARSRE…ISGMEEISVS (275 aa)) the chain is Cytoplasmic. The interval 31–155 (SREEVAEPPQ…EEEKARQAKE (125 aa)) is disordered. Basic and acidic residues predominate over residues 101 to 155 (KRQEREAQRQAEEATRESRNTKQDWYAEMRRKKDEEREAEELKLEEEEKARQAKE).

Belongs to the DDRGK1 family.

The protein resides in the endoplasmic reticulum membrane. In terms of biological role, substrate adapter for ufmylation, the covalent attachment of the ubiquitin-like modifier UFM1 to substrate proteins. The sequence is that of DDRGK domain-containing protein 1 from Arabidopsis thaliana (Mouse-ear cress).